The chain runs to 148 residues: Large-conductance mechanosensitive channel (148 aa).

Transmembrane regions (helical) follow at residues 9 to 29 (AFAV…GAAF) and 79 to 99 (IQTV…VKAI).

Belongs to the MscL family. Homopentamer.

The protein localises to the cell inner membrane. Functionally, channel that opens in response to stretch forces in the membrane lipid bilayer. May participate in the regulation of osmotic pressure changes within the cell. In Pseudomonas savastanoi pv. phaseolicola (strain 1448A / Race 6) (Pseudomonas syringae pv. phaseolicola (strain 1448A / Race 6)), this protein is Large-conductance mechanosensitive channel.